A 268-amino-acid polypeptide reads, in one-letter code: Interferon alpha/beta receptor 2 (268 aa).

The N-terminal stretch at 1–16 (MGPWTLLLLHLPLVVS) is a signal peptide. Over 17–223 (MLPAPTNVSI…TSPTAANTVP (207 aa)) the chain is Extracellular. Fibronectin type-III domains follow at residues 18–114 (LPAP…LTDT) and 115–217 (LLGP…TSPT). 2 disulfide bridges follow: C65/C74 and C191/C211. A helical membrane pass occupies residues 224–244 (VVLSVLCAFSLLVVLLCGIVV). Residues 245–268 (YSGRLLCMHKPLPKTLSSVPLCGG) lie on the Cytoplasmic side of the membrane.

It belongs to the type II cytokine receptor family. Heterodimer with IFNAR1; forming the receptor for type I interferon.

Its subcellular location is the cell membrane. It localises to the cytoplasm. In terms of biological role, together with IFNAR1, forms the heterodimeric receptor for type I interferons (including interferons alpha, beta, epsilon, omega and kappa). Type I interferon binding activates the JAK-STAT signaling cascade, resulting in transcriptional activation or repression of interferon-regulated genes that encode the effectors of the interferon response. Mechanistically, type I interferon-binding brings the IFNAR1 and IFNAR2 subunits into close proximity with one another, driving their associated Janus kinases (JAKs) (TYK2 bound to IFNAR1 and JAK1 bound to IFNAR2) to cross-phosphorylate one another. The activated kinases phosphorylate specific tyrosine residues on the intracellular domains of IFNAR1 and IFNAR2, forming docking sites for the STAT transcription factors (STAT1, STAT2 and STAT). STAT proteins are then phosphorylated by the JAKs, promoting their translocation into the nucleus to regulate expression of interferon-regulated genes. In Oncorhynchus mykiss (Rainbow trout), this protein is Interferon alpha/beta receptor 2.